Here is a 1788-residue protein sequence, read N- to C-terminus: MLELRLIVVIVLALLSWQWDPVDSQRPPQHGRRDRPKYPPNKFIKTHPCERSSCYPATGNLLIGRENRLTASSTCGLHSPERFCILSHLQDKKCFLCDTREETKHDPYKNHRIGQIIYKTKPGTNIPTWWQSENGKENATIQLDLEAEFHFTHLIITFTTFRPAAMYIERSFDFGQTWHIYRYFAYDCKESFPGVPTVLENITDVMCTSRYSNVEPSRNGEVIFRVLPPNINVTDPYAEHVQNQLKMTNLRIQMTKLHKLGDNLLDSRLENEEKYYYGISNMVVRGSCSCYGHASQCLPLDPAFSQADNEDGMVHGRCECTHNTKGMNCEECEDFFNDLPWKPAFGKKTNACKKCECNDHAVSCHFDEAVFTASGFVSGGVCDNCLHNTRGQHCEECMPYFYRDPEQDITSERVCQPCDCDPQGSSDDGICDSLNELEEGAVAGACHCKAFVTGRRCNQCKDGYWNLQSDNPEGCEPCTCNPLGTLNNSGCVMRTGECKCKKYVTGKDCNQCMPETYGLSESPEGCSLCNCDAGGSYDNYCDVISGQCRCRPHMTGRSCSQPKQNYFIPLLPEVHEAEVVDECISYGANGNCSLVAETPDGSFTGIGFTRVPENSELVFTVGDIPRSMPYDAVIRYQSTSRGDWENAFITLVRPDQVDPEGGCGELAAATSSETRIPFSLPDRSRQVVALNEVCLEAGKVYKFRIYFERKRHDVDSPTATILVDSLTLIPRIDVTPIFQGSVLADIRKKDYEKYNCKSSLYDMNYKSDPKCQNLDNILSVFVHDGASMCNCNPTGSLSKVCESNGGYCQCKPNVVGRQCDQCAPGTYGFGPEGCKACDCNSIGSKDKYCDLITGQCQCVPNTYGRECNQCQPGYWNFPECRVCQCNGHAATCDPIQGTCIDCQDSTTGYSCDSCLDGYYGNPLFGSEIGCRPCRCPETVASGLAHADGCSLDTRNNNMLCHCQEGYSGSRCEICADNFFGNPDNGGTCSKCECSNNVDLYDTGNCDRQTGACLKCLYQTTGDHCELCKDGFFGDALQQNCQQCECDFLGTNNTIAHCDRFTGQCPCLPNVQGVRCDQCAENHWKIASGEGCESCNCDPIGALHEQCNSYTGQCQCKPGFGGRACNQCQAHYWGNPNEKCQPCECDQFGAADFQCDRETGNCVCHEGIGGYKCNECARGYIGQFPHCSPCGECFNNWDLILSALEDATTATILRAKEIKQVGATGAYTSEFSELDKKLQHIRNLLQNTSVSLVDIEKLDYETQSLRDQLQASHGRLSETEQNLDDIYNSLSLSGVELESLQNHSRLVQQLSKELKENGIQLQESNIEGALNLTRHAYERVSNLSTLKDEANELASNTDRNCKRVENLSNKIQAEADDLANNNKLIEDYRAELTSLTSQIPELNNQVCGKPGDPCDSLCGGAGCGHCGGFLSCEHGAKTHSEEALKVAKDAETAITSKKDQADQTIRALTQAKLNASEAYEKAKRGFEQSERYLNQTNANIKLAENLFIALNNFQENKTASPSESKELAQKTLDLDLKLEPEEIETLGDQINRAVSSLKNVEAIIYRTKPDLDRVNNLQSIANATKEKADKILDSANSVVESLAAADESQGKAKDAIQQANSNIELAGQDLEKIDEETYSAEAPANNTAQQVEKLAKKVQKLQNNIMKNDRDAKEITKEAGSVKLEAMRARGEANNLQSATSATNQTLTDRASRSENARERAKQLLQRASKLTVDTNAKLKDLNDLQTVYLNKNQQLLRLQAEIGPLNKELNEHLIHIKERGSHYRQCYT.

An N-terminal signal peptide occupies residues 1 to 24; sequence MLELRLIVVIVLALLSWQWDPVDS. Positions 23-43 are disordered; the sequence is DSQRPPQHGRRDRPKYPPNKF. A Laminin N-terminal domain is found at 50-287; sequence ERSSCYPATG…GISNMVVRGS (238 aa). Residues Asn-138, Asn-201, and Asn-232 are each glycosylated (N-linked (GlcNAc...) asparagine). Disulfide bonds link Cys-288–Cys-297, Cys-290–Cys-318, Cys-320–Cys-329, Cys-332–Cys-352, Cys-355–Cys-364, Cys-357–Cys-382, Cys-385–Cys-394, Cys-397–Cys-415, Cys-418–Cys-431, Cys-420–Cys-446, Cys-448–Cys-457, Cys-460–Cys-475, Cys-478–Cys-491, Cys-480–Cys-498, Cys-500–Cys-509, Cys-512–Cys-526, Cys-529–Cys-541, Cys-531–Cys-548, and Cys-550–Cys-559. Laminin EGF-like domains lie at 288-354, 355-417, 418-477, and 478-528; these read CSCY…ACKK, CECN…VCQP, CDCD…GCEP, and CTCN…GCSL. N-linked (GlcNAc...) asparagine glycosylation is present at Asn-487. The region spanning 529–559 is the Laminin EGF-like 5; truncated domain; it reads CNCDAGGSYDNYCDVISGQCRCRPHMTGRSC. Positions 567-783 constitute a Laminin IV type B domain; it reads FIPLLPEVHE…LDNILSVFVH (217 aa). N-linked (GlcNAc...) asparagine glycosylation occurs at Asn-591. The Cell attachment site motif lies at 641–643; sequence RGD. 32 disulfides stabilise this stretch: Cys-789/Cys-801, Cys-791/Cys-808, Cys-810/Cys-819, Cys-822/Cys-834, Cys-837/Cys-849, Cys-839/Cys-856, Cys-858/Cys-867, Cys-870/Cys-880, Cys-883/Cys-892, Cys-885/Cys-899, Cys-902/Cys-911, Cys-914/Cys-930, Cys-933/Cys-949, Cys-935/Cys-960, Cys-962/Cys-971, Cys-974/Cys-988, Cys-991/Cys-1005, Cys-993/Cys-1012, Cys-1015/Cys-1024, Cys-1027/Cys-1040, Cys-1043/Cys-1057, Cys-1045/Cys-1064, Cys-1066/Cys-1075, Cys-1078/Cys-1091, Cys-1094/Cys-1106, Cys-1096/Cys-1113, Cys-1115/Cys-1124, Cys-1127/Cys-1139, Cys-1142/Cys-1154, Cys-1144/Cys-1161, Cys-1163/Cys-1172, and Cys-1175/Cys-1186. Laminin EGF-like domains are found at residues 789–836, 837–882, 883–932, 933–990, 991–1042, 1043–1093, 1094–1141, and 1142–1188; these read CNCN…GCKA, CDCN…ECRV, CQCN…GCRP, CRCP…TCSK, CECS…NCQQ, CECD…GCES, CNCD…KCQP, and CECD…HCSP. Residue Asn-1051 is glycosylated (N-linked (GlcNAc...) asparagine). The domain II stretch occupies residues 1189–1405; sequence CGECFNNWDL…SQIPELNNQV (217 aa). N-linked (GlcNAc...) asparagine glycosylation is found at Asn-1246, Asn-1301, Asn-1330, and Asn-1341. Residues 1255–1405 are a coiled coil; the sequence is EKLDYETQSL…SQIPELNNQV (151 aa). The interval 1406-1432 is domain alpha; it reads CGKPGDPCDSLCGGAGCGHCGGFLSCE. Positions 1433 to 1788 are domain I; it reads HGAKTHSEEA…RGSHYRQCYT (356 aa). Positions 1453-1505 form a coiled coil; that stretch reads ITSKKDQADQTIRALTQAKLNASEAYEKAKRGFEQSERYLNQTNANIKLAENL. 3 N-linked (GlcNAc...) asparagine glycosylation sites follow: Asn-1473, Asn-1493, and Asn-1515. Residues 1540 to 1561 adopt a coiled-coil conformation; it reads EEIETLGDQINRAVSSLKNVEA. N-linked (GlcNAc...) asparagine glycosylation is found at Asn-1581, Asn-1644, and Asn-1703. Residues 1608-1762 adopt a coiled-coil conformation; it reads QGKAKDAIQQ…QQLLRLQAEI (155 aa). A disordered region spans residues 1690 to 1719; sequence GEANNLQSATSATNQTLTDRASRSENARER. Positions 1693–1708 are enriched in polar residues; sequence NNLQSATSATNQTLTD. The span at 1709-1719 shows a compositional bias: basic and acidic residues; that stretch reads RASRSENARER.

In terms of assembly, laminin is a complex glycoprotein, consisting of three different polypeptide chains (alpha, beta, gamma), which are bound to each other by disulfide bonds into a cross-shaped molecule comprising one long and three short arms with globules at each end. Found in the basement membranes (major component).

The protein resides in the secreted. It is found in the extracellular space. The protein localises to the extracellular matrix. Its subcellular location is the basement membrane. Functionally, binding to cells via a high affinity receptor, laminin is thought to mediate the attachment, migration and organization of cells into tissues during embryonic development by interacting with other extracellular matrix components. Required for Ndg localization to the basement membrane. The protein is Laminin subunit beta-1 (LanB1) of Drosophila melanogaster (Fruit fly).